The following is a 238-amino-acid chain: Survival of motor neuron-related-splicing factor 30 (238 aa).

The Tudor domain maps to 72 to 132; the sequence is SWKVGDKCMA…KPVEEGRKAK (61 aa). Positions 142 to 160 match the Nuclear localization signal motif; that stretch reads KKEMIAQQREYKKKKALKK. Phosphoserine is present on serine 201. Lysine 219 is subject to N6-acetyllysine.

It belongs to the SMN family. As to quaternary structure, associates with spliceosomes. Associates with U4/U5/U6 tri-snRNP and with U2 snRNP.

The protein localises to the nucleus speckle. It is found in the nucleus. The protein resides in the cajal body. Functionally, involved in spliceosome assembly. The polypeptide is Survival of motor neuron-related-splicing factor 30 (Smndc1) (Mus musculus (Mouse)).